A 941-amino-acid chain; its full sequence is Pre-mRNA-processing factor 6 (941 aa).

The disordered stretch occupies residues 1 to 79 (MNKKKKPFLG…DEDLNDTNYD (79 aa)). Residues 39 to 65 (DANDPVDDRHAPPGKRTVGDQMKKNQA) show a composition bias toward basic and acidic residues. Residues 66–78 (ADDDDEDLNDTNY) are compositionally biased toward acidic residues. Ser-143 is subject to Phosphoserine. Phosphothreonine occurs at positions 180, 266, and 275. The residue at position 279 (Ser-279) is a Phosphoserine. 9 HAT repeats span residues 384–416 (TDIR…LEEP), 418–444 (DARI…ARLE), 445–476 (TYEN…LEEA), 554–586 (NALE…FGKN), 588–620 (GTRE…SKWL), 622–654 (GDVP…LESE), 689–721 (DNIR…IEEQ), 723–755 (EMME…LEEK), and 855–887 (RKIT…FELQ).

As to quaternary structure, identified in the spliceosome B complex. Identified in the spliceosome C complex. Associates with the U5 snRNP particle. Component of the U4/U6-U5 tri-snRNP complex composed of the U4, U6 and U5 snRNAs and at least PRPF3, PRPF4, PRPF6, PRPF8, PRPF31, SNRNP200, TXNL4A, SNRNP40, DDX23, CD2BP2, PPIH, SNU13, EFTUD2, SART1 and USP39, LSm proteins LSm2-8 and Sm proteins. Interacts with ARAF1. Interacts with AR and NR3C1, but not ESR1, independently of the presence of hormones. Interacts with USH1G. Phosphorylated by PRP4K during spliceosome assembly.

The protein localises to the nucleus. It localises to the nucleoplasm. Its subcellular location is the nucleus speckle. In terms of biological role, involved in pre-mRNA splicing as component of the U4/U6-U5 tri-snRNP complex, one of the building blocks of the spliceosome. Enhances dihydrotestosterone-induced transactivation activity of AR, as well as dexamethasone-induced transactivation activity of NR3C1, but does not affect estrogen-induced transactivation. The protein is Pre-mRNA-processing factor 6 (PRPF6) of Pongo abelii (Sumatran orangutan).